We begin with the raw amino-acid sequence, 274 residues long: Large ribosomal subunit protein uL2cz/uL2cy (274 aa).

The interval 225–274 (PVDHPHGGGEGRAPIGRKKPVTPWGYPALGRRTRKRKKYSETLILRRRSK) is disordered.

This sequence belongs to the universal ribosomal protein uL2 family. Part of the 50S ribosomal subunit.

It localises to the plastid. It is found in the chloroplast. The chain is Large ribosomal subunit protein uL2cz/uL2cy (rpl2-A) from Crucihimalaya wallichii (Rock-cress).